Here is a 226-residue protein sequence, read N- to C-terminus: Large ribosomal subunit protein uL1 (226 aa).

This sequence belongs to the universal ribosomal protein uL1 family. As to quaternary structure, part of the 50S ribosomal subunit.

In terms of biological role, binds directly to 23S rRNA. The L1 stalk is quite mobile in the ribosome, and is involved in E site tRNA release. Protein L1 is also a translational repressor protein, it controls the translation of the L11 operon by binding to its mRNA. This chain is Large ribosomal subunit protein uL1, found in Treponema pallidum (strain Nichols).